Here is a 146-residue protein sequence, read N- to C-terminus: Large ribosomal subunit protein uL15 (146 aa).

The span at 1–13 shows a compositional bias: basic and acidic residues; the sequence is MKLNELKPNEGSR. A disordered region spans residues 1 to 54; that stretch reads MKLNELKPNEGSRRNRKRVGRGTSSGYGKTAGRGQKGQLARTGGKTRLGFEGGQ. The span at 23–35 shows a compositional bias: gly residues; sequence TSSGYGKTAGRGQ.

Belongs to the universal ribosomal protein uL15 family. Part of the 50S ribosomal subunit.

Binds to the 23S rRNA. The polypeptide is Large ribosomal subunit protein uL15 (Lactobacillus johnsonii (strain CNCM I-12250 / La1 / NCC 533)).